The sequence spans 900 residues: Zinc finger protein 574 (900 aa).

C2H2-type zinc fingers lie at residues Y16–H38, Y76–H98, and Y126–H148. A Phosphoserine modification is found at S164. A C2H2-type 4 zinc finger spans residues Y213–H235. A compositionally biased stretch (low complexity) spans A244–V254. The disordered stretch occupies residues A244–G306. The span at H273 to D290 shows a compositional bias: basic and acidic residues. Phosphoserine is present on S301. 10 consecutive C2H2-type zinc fingers follow at residues L312 to H334, F339 to H361, F367 to H389, H395 to H416, Y469 to H492, H498 to H520, F526 to H548, Y554 to H576, Y582 to H604, and Y610 to H633. Residues Y639–A662 form a C2H2-type 15; degenerate zinc finger. The C2H2-type 16 zinc-finger motif lies at F670–H692. The tract at residues A690–G741 is disordered. S721 bears the Phosphoserine mark. Residues S721 to P736 show a composition bias toward low complexity. Residue T728 is modified to Phosphothreonine. 4 C2H2-type zinc fingers span residues P742–H764, Y770–H792, F798–H820, and Y826–H848. Residue R836 is modified to Asymmetric dimethylarginine.

It belongs to the krueppel C2H2-type zinc-finger protein family.

It is found in the nucleus. Its function is as follows. May be involved in transcriptional regulation. This is Zinc finger protein 574 (Znf574) from Mus musculus (Mouse).